We begin with the raw amino-acid sequence, 170 residues long: Cilia- and flagella-associated protein 276 (170 aa).

Disordered stretches follow at residues 1 to 37 (MPLT…PTHL) and 151 to 170 (HTAA…FFST).

Microtubule inner protein component of sperm flagellar doublet microtubules. In terms of tissue distribution, expressed in trachea multiciliated cells.

It localises to the cytoplasm. It is found in the cytoskeleton. The protein localises to the cilium axoneme. The protein resides in the flagellum axoneme. In terms of biological role, microtubule inner protein (MIP) part of the dynein-decorated doublet microtubules (DMTs) in cilia axoneme, which is required for motile cilia beating. May play an important role for the maintenance of myelin-axon integrity. May affect intracellular Ca(2+) homeostasis. This is Cilia- and flagella-associated protein 276 from Bos taurus (Bovine).